Reading from the N-terminus, the 151-residue chain is MIIMKGYSMEIEGNHAKARIREADISLKDSVNIAHHLRGMPLSRAKEIIDAVINKTYAIPYFRYLDSVSHRPGVGPGRYPVKAAKAFKQLLENVENNAEFKGLNTDNLVIKHIAANKGRMIKKYTPKAYGRAGANFKDLINLEIIVTEGSE.

It belongs to the universal ribosomal protein uL22 family. Part of the 50S ribosomal subunit.

Its function is as follows. This protein binds specifically to 23S rRNA. It makes multiple contacts with different domains of the 23S rRNA in the assembled 50S subunit and ribosome. In terms of biological role, the globular domain of the protein is located near the polypeptide exit tunnel on the outside of the subunit, while an extended beta-hairpin is found that lines the wall of the exit tunnel in the center of the 70S ribosome. The chain is Large ribosomal subunit protein uL22 from Thermoplasma acidophilum (strain ATCC 25905 / DSM 1728 / JCM 9062 / NBRC 15155 / AMRC-C165).